The chain runs to 303 residues: MATH domain and coiled-coil domain-containing protein At3g58250 (303 aa).

The 128-residue stretch at 8 to 135 folds into the MATH domain; it reads KKKFSWVIKN…KGELKIVVEI (128 aa). Residues 231-287 adopt a coiled-coil conformation; that stretch reads KLDWLKKKLDQVTQKKEKEAAGETRMHEIGEELKDLKLKCSDLEAQLDKEKADVLAA.

This chain is MATH domain and coiled-coil domain-containing protein At3g58250, found in Arabidopsis thaliana (Mouse-ear cress).